The sequence spans 203 residues: Thymidine kinase (203 aa).

Residues 9–16 and 87–90 each bind ATP; these read ATMNAGKT and DEAQ. Catalysis depends on Glu88, which acts as the Proton acceptor. Cys145, Cys147, Cys181, and His184 together coordinate Zn(2+).

Belongs to the thymidine kinase family. Homotetramer.

The protein localises to the cytoplasm. The enzyme catalyses thymidine + ATP = dTMP + ADP + H(+). In Mesorhizobium japonicum (strain LMG 29417 / CECT 9101 / MAFF 303099) (Mesorhizobium loti (strain MAFF 303099)), this protein is Thymidine kinase.